Consider the following 295-residue polypeptide: GATA zinc finger domain-containing protein 23 (295 aa).

Positions 115 to 126 (ASTSKTATSKNV) are enriched in low complexity. Positions 115–240 (ASTSKTATSK…KRGRPSKIQP (126 aa)) are disordered. Polar residues predominate over residues 127 to 145 (ISNIENNTNKSQPLESNDL). The segment covering 146–163 (TPPSSKSSNSSPSTSPSK) has biased composition (low complexity). The segment covering 164–174 (RVSKSKTRVTK) has biased composition (basic residues). Residues 181-227 (STSSSGETENLTTTSTADTTATTDTADTTDGTNTRTSNTSSDDTTTE) are compositionally biased toward low complexity. A DNA-binding region (a.T hook) is located at residues 229 to 241 (TKKRGRPSKIQPD). A GATA-type zinc finger spans residues 243-270 (CYVCRRTFTSYWRKGIFNDQNEDLCNPC).

This Dictyostelium discoideum (Social amoeba) protein is GATA zinc finger domain-containing protein 23 (gtaW).